The following is a 268-amino-acid chain: MRGAYYVAFALLVAASTRTAAEPDQAEPHIAPNNDYMTSGGAFNKMLPRRILRESPDPKDRLPVYASDEERMVNRLSNGNSIAKGLERTIMKAANVLRTNGEDVIANAAKPIKNYNRLRPKLEIKKSKRQRIEPTLSKSSEHKLHTTSNSKKSLVSSASAKGQGRDEPRATVNTAKKMQHNHRSAPSRSSPTSADVSDGRLEKQLNAQKAINLDKNKRPDEAKIRNKKQHVIDPTPKNENGQALRAPPTPESLGIGGKQCTVRIGREK.

The signal sequence occupies residues 1-21 (MRGAYYVAFALLVAASTRTAA). The RxLR-dEER signature appears at 50–71 (RILRESPDPKDRLPVYASDEER). Residues 120 to 257 (PKLEIKKSKR…PTPESLGIGG (138 aa)) form a disordered region. Residues 148 to 161 (SNSKKSLVSSASAK) show a composition bias toward low complexity. A compositionally biased stretch (basic and acidic residues) spans 212–224 (NLDKNKRPDEAKI).

It belongs to the RxLR effector family.

It localises to the secreted. Its subcellular location is the host cell. Its function is as follows. Secreted effector that completely suppresses the host cell death induced by cell death-inducing proteins. This Plasmopara viticola (Downy mildew of grapevine) protein is Secreted RxLR effector protein 32.